The chain runs to 122 residues: Large ribosomal subunit protein uL14 (122 aa).

It belongs to the universal ribosomal protein uL14 family. As to quaternary structure, part of the 50S ribosomal subunit. Forms a cluster with proteins L3 and L19. In the 70S ribosome, L14 and L19 interact and together make contacts with the 16S rRNA in bridges B5 and B8.

Binds to 23S rRNA. Forms part of two intersubunit bridges in the 70S ribosome. This chain is Large ribosomal subunit protein uL14, found in Renibacterium salmoninarum (strain ATCC 33209 / DSM 20767 / JCM 11484 / NBRC 15589 / NCIMB 2235).